A 563-amino-acid chain; its full sequence is Dihydroxy-acid dehydratase (563 aa).

Cys50 provides a ligand contact to [2Fe-2S] cluster. Asp82 contacts Mg(2+). Cys123 provides a ligand contact to [2Fe-2S] cluster. Asp124 and Lys125 together coordinate Mg(2+). Lys125 bears the N6-carboxylysine mark. Cys195 serves as a coordination point for [2Fe-2S] cluster. Glu447 contacts Mg(2+). Ser473 (proton acceptor) is an active-site residue.

It belongs to the IlvD/Edd family. In terms of assembly, homodimer. [2Fe-2S] cluster is required as a cofactor. Requires Mg(2+) as cofactor.

The enzyme catalyses (2R)-2,3-dihydroxy-3-methylbutanoate = 3-methyl-2-oxobutanoate + H2O. It carries out the reaction (2R,3R)-2,3-dihydroxy-3-methylpentanoate = (S)-3-methyl-2-oxopentanoate + H2O. The protein operates within amino-acid biosynthesis; L-isoleucine biosynthesis; L-isoleucine from 2-oxobutanoate: step 3/4. It participates in amino-acid biosynthesis; L-valine biosynthesis; L-valine from pyruvate: step 3/4. Its function is as follows. Functions in the biosynthesis of branched-chain amino acids. Catalyzes the dehydration of (2R,3R)-2,3-dihydroxy-3-methylpentanoate (2,3-dihydroxy-3-methylvalerate) into 2-oxo-3-methylpentanoate (2-oxo-3-methylvalerate) and of (2R)-2,3-dihydroxy-3-methylbutanoate (2,3-dihydroxyisovalerate) into 2-oxo-3-methylbutanoate (2-oxoisovalerate), the penultimate precursor to L-isoleucine and L-valine, respectively. The protein is Dihydroxy-acid dehydratase of Nostoc sp. (strain PCC 7120 / SAG 25.82 / UTEX 2576).